Here is a 61-residue protein sequence, read N- to C-terminus: Small ribosomal subunit protein uS14B (61 aa).

Residues cysteine 24, cysteine 27, cysteine 40, and cysteine 43 each contribute to the Zn(2+) site.

This sequence belongs to the universal ribosomal protein uS14 family. Zinc-binding uS14 subfamily. As to quaternary structure, part of the 30S ribosomal subunit. Contacts proteins S3 and S10. Zn(2+) serves as cofactor.

Binds 16S rRNA, required for the assembly of 30S particles and may also be responsible for determining the conformation of the 16S rRNA at the A site. The sequence is that of Small ribosomal subunit protein uS14B from Limosilactobacillus reuteri (strain DSM 20016) (Lactobacillus reuteri).